Here is a 326-residue protein sequence, read N- to C-terminus: ATP synthase subunit b 2 (326 aa).

A helical membrane pass occupies residues 2–22 (LIDWFTVVAQALNFLILVWLL). Basic and acidic residues-rich tracts occupy residues 275–298 (QQGR…RKEN) and 306–326 (PPPE…IGSP). The segment at 275-326 (QQGRKEGRAVQNWDKAESEIRKENLSPAKTEPPPEAKAKPKPEEPKPEIGSP) is disordered.

Belongs to the ATPase B chain family. F-type ATPases have 2 components, F(1) - the catalytic core - and F(0) - the membrane proton channel. F(1) has five subunits: alpha(3), beta(3), gamma(1), delta(1), epsilon(1). F(0) has three main subunits: a(1), b(2) and c(10-14). The alpha and beta chains form an alternating ring which encloses part of the gamma chain. F(1) is attached to F(0) by a central stalk formed by the gamma and epsilon chains, while a peripheral stalk is formed by the delta and b chains.

It is found in the cell inner membrane. In terms of biological role, f(1)F(0) ATP synthase produces ATP from ADP in the presence of a proton or sodium gradient. F-type ATPases consist of two structural domains, F(1) containing the extramembraneous catalytic core and F(0) containing the membrane proton channel, linked together by a central stalk and a peripheral stalk. During catalysis, ATP synthesis in the catalytic domain of F(1) is coupled via a rotary mechanism of the central stalk subunits to proton translocation. Component of the F(0) channel, it forms part of the peripheral stalk, linking F(1) to F(0). This is ATP synthase subunit b 2 from Albidiferax ferrireducens (strain ATCC BAA-621 / DSM 15236 / T118) (Rhodoferax ferrireducens).